Reading from the N-terminus, the 1076-residue chain is Vacuolar membrane protease (1076 aa).

At 1 to 11 (MKCYNPSAFVP) the chain is on the cytoplasmic side. A helical transmembrane segment spans residues 12 to 32 (MAVTLVTVVIYLGVFIPLLII). Topologically, residues 33–437 (HETVPSAPDD…TVFAVFRLRT (405 aa)) are vacuolar. N-linked (GlcNAc...) asparagine glycosylation is found at asparagine 50, asparagine 99, and asparagine 156. Histidine 220 and aspartate 232 together coordinate Zn(2+). Catalysis depends on glutamate 266, which acts as the Proton acceptor. Residues glutamate 267, glutamate 292, and histidine 364 each coordinate Zn(2+). A helical transmembrane segment spans residues 438–458 (LFAWSLTLLIASPLILFAVSY). Residues 459-491 (LLNRQEKFYFFAGSIKSKNPEDEPISLGGWRGA) are Cytoplasmic-facing. Residues 492–512 (FRFPITLFITSAITFACASLI) traverse the membrane as a helical segment. The Vacuolar portion of the chain corresponds to 513–525 (NKINPMIIYSSPY). Residues 526–546 (AVWSMSATLFFSVFWFIMAGC) traverse the membrane as a helical segment. The Cytoplasmic segment spans residues 547 to 556 (NFVRPSALQR). A helical transmembrane segment spans residues 557-577 (GYAFMWMFVFGWILLVVATVY). The Vacuolar segment spans residues 578–584 (EDRFKIS). Residues 585-605 (GGYLFVFYEAAIFLATLIAIC) traverse the membrane as a helical segment. Residues 606-738 (EQFALPRKST…LPIWTWLVQY (133 aa)) are Cytoplasmic-facing. 2 disordered regions span residues 619–662 (DSQN…EETV) and 701–720 (SYDG…HPYG). Residues 621 to 632 (QNDHSDNQDHHH) show a composition bias toward basic and acidic residues. Over residues 647-660 (PNADDEAAEEDQEE) the composition is skewed to acidic residues. Residues 739–759 (LLVGPFILVILGQVGLFLVAA) form a helical membrane-spanning segment. The Vacuolar segment spans residues 760 to 771 (LHQTGTDGSPLF). Residues 772–792 (LPYLIVAIFSILLLLPVTPFI) form a helical membrane-spanning segment. The Cytoplasmic portion of the chain corresponds to 793–799 (HRLTHHM). The chain crosses the membrane as a helical span at residues 800–820 (PTFFFLVFIGTLIYNLVAFPF). Over 821 to 1076 (SPNNRYKAYF…LGLAFLLAYV (256 aa)) the chain is Vacuolar. Asparagine 912 carries an N-linked (GlcNAc...) asparagine glycan.

It belongs to the peptidase M28 family. Requires Zn(2+) as cofactor.

It is found in the vacuole membrane. Functionally, may be involved in vacuolar sorting and osmoregulation. The chain is Vacuolar membrane protease from Sclerotinia sclerotiorum (strain ATCC 18683 / 1980 / Ss-1) (White mold).